The sequence spans 367 residues: Cellular tumor antigen p53 (367 aa).

The interval Met-1–Pro-30 is transcription activation (acidic). Residues Pro-30–Ser-84 are disordered. Residues Pro-46–Val-81 show a composition bias toward pro residues. Residues Asp-87–Arg-278 mediate DNA binding. Zn(2+)-binding residues include Cys-161, His-164, Cys-224, and Cys-228. Residues Arg-259–Arg-266 are interaction with DNA. Disordered regions lie at residues Phe-275–Val-303 and Leu-333–Asp-367. The short motif at Lys-286–Arg-302 is the Bipartite nuclear localization signal element. The oligomerization stretch occupies residues Asn-308–Ala-339. The Nuclear export signal signature appears at Glu-322 to Leu-333. The interval Arg-347–Lys-364 is basic (repression of DNA-binding).

This sequence belongs to the p53 family. Binds DNA as a homotetramer. Requires Zn(2+) as cofactor.

The protein localises to the cytoplasm. It localises to the nucleus. Multifunctional transcription factor that induces cell cycle arrest, DNA repair or apoptosis upon binding to its target DNA sequence. Acts as a tumor suppressor in many tumor types; induces growth arrest or apoptosis depending on the physiological circumstances and cell type. Negatively regulates cell division by controlling expression of a set of genes required for this process. One of the activated genes is an inhibitor of cyclin-dependent kinases. Apoptosis induction seems to be mediated either by stimulation of BAX and FAS antigen expression, or by repression of Bcl-2 expression. The sequence is that of Cellular tumor antigen p53 (TP53) from Gallus gallus (Chicken).